A 415-amino-acid polypeptide reads, in one-letter code: MSTRRVVVDAPAGASSSMPLQRHKASFRAAQSPSSLDGLPASRTVAVSGLVRTPRVYVGMAPSGPTGGLGARVTRRALGISSVFLQGLRSSGLATAPAPSLERDLGAVEDLGGCLVEYMAKVHALEKVSQELEAQLRMHLESKATRSENWGALRASWASSCQQVGEAVLENARLMLQTENIQAGADDFKERYENEQPFRKAAEEEINSLYKVIDEANSSKMDLESQIESLKEELGFLSRSYEEDVKMLYKQLAGSELEQLNVPIGTGLDDILETIRIHWERDVEKNRLQAGALLQAKQQAELARRAQTQEEKLAAALRVELHNTSCQIQSLQAETESLRALKRGLENTLHDAKHWHDIELQNLGAVVSRLEAELREMRAEAEQQLQAREHLLSHKCQLQRDVASYHALLDREESS.

Positions 1–26 (MSTRRVVVDAPAGASSSMPLQRHKAS) are disordered. Serine 2 carries the N-acetylserine modification. A head region spans residues 2–114 (STRRVVVDAP…LGAVEDLGGC (113 aa)). 3 positions are modified to phosphoserine: serine 26, serine 32, and serine 35. The residue at position 53 (threonine 53) is a Phosphothreonine. 2 positions are modified to phosphoserine: serine 90 and serine 100. One can recognise an IF rod domain in the interval 104 to 415 (DLGAVEDLGG…HALLDREESS (312 aa)). 3 coiled-coil regions span residues 115–144 (LVEYMAKVHALEKVSQELEAQLRMHLESKA), 199–248 (RKAA…VKML), and 295–395 (QAKQ…LSHK). The segment at 396–415 (CQLQRDVASYHALLDREESS) is tail.

The protein belongs to the intermediate filament family. In terms of assembly, part of a complex required for lens intermediate filament formation composed of BFSP1, BFSP2 and CRYAA. Found in a complex composed of PPL (via C-terminal linker domain), BFSP1 and BFSP2 in the retinal lens. Within the complex interacts with PPL (via C-terminal linker domain) and with BFSP1. Identified in a complex that contains VIM, EZR, AHNAK, BFSP1, BFSP2, ANK2, PLEC, PRX and spectrin. Interacts with LGSN. Interacts with VIM. As to expression, abundantly expressed in both the inner and outer cortex of the retina, expressed at a lower level in the nucleus of the retina (at protein level). Detected in eye lens fiber cells (at protein level).

The protein localises to the cell membrane. Its subcellular location is the cytoplasm. It is found in the cytoskeleton. The protein resides in the cell cortex. Functionally, required for the correct formation of lens intermediate filaments as part of a complex composed of BFSP1, BFSP2 and CRYAA. Plays a role in maintenance of retinal lens optical clarity. This is Phakinin (BFSP2) from Bos taurus (Bovine).